Consider the following 365-residue polypeptide: Dual-specificity RNA methyltransferase RlmN (365 aa).

Glutamate 91 functions as the Proton acceptor in the catalytic mechanism. A Radical SAM core domain is found at 97–337; the sequence is ETSRGTLCIS…TTVRKTRGDD (241 aa). Cysteine 104 and cysteine 342 are disulfide-bonded. [4Fe-4S] cluster is bound by residues cysteine 111, cysteine 115, and cysteine 118. S-adenosyl-L-methionine-binding positions include 168 to 169, serine 200, 222 to 224, and asparagine 299; these read GE and SLH. Cysteine 342 functions as the S-methylcysteine intermediate in the catalytic mechanism.

Belongs to the radical SAM superfamily. RlmN family. It depends on [4Fe-4S] cluster as a cofactor.

The protein localises to the cytoplasm. The enzyme catalyses adenosine(2503) in 23S rRNA + 2 reduced [2Fe-2S]-[ferredoxin] + 2 S-adenosyl-L-methionine = 2-methyladenosine(2503) in 23S rRNA + 5'-deoxyadenosine + L-methionine + 2 oxidized [2Fe-2S]-[ferredoxin] + S-adenosyl-L-homocysteine. The catalysed reaction is adenosine(37) in tRNA + 2 reduced [2Fe-2S]-[ferredoxin] + 2 S-adenosyl-L-methionine = 2-methyladenosine(37) in tRNA + 5'-deoxyadenosine + L-methionine + 2 oxidized [2Fe-2S]-[ferredoxin] + S-adenosyl-L-homocysteine. Specifically methylates position 2 of adenine 2503 in 23S rRNA and position 2 of adenine 37 in tRNAs. m2A2503 modification seems to play a crucial role in the proofreading step occurring at the peptidyl transferase center and thus would serve to optimize ribosomal fidelity. The sequence is that of Dual-specificity RNA methyltransferase RlmN from Nitrosospira multiformis (strain ATCC 25196 / NCIMB 11849 / C 71).